Consider the following 649-residue polypeptide: Acetyl-coenzyme A synthetase (649 aa).

CoA is bound by residues 198 to 201 (RRGK), threonine 317, and asparagine 341. Residues 393–395 (GEP), 417–422 (DTWWQT), aspartate 506, and arginine 521 contribute to the ATP site. CoA is bound at residue serine 529. Residue arginine 532 participates in ATP binding. Mg(2+) is bound by residues valine 543, histidine 545, and valine 548. Lysine 612 is modified (N6-acetyllysine). The tract at residues 625–649 (QPVQGDTSTLEDPTVLERLQASPAL) is disordered.

Belongs to the ATP-dependent AMP-binding enzyme family. Requires Mg(2+) as cofactor. Post-translationally, acetylated. Deacetylation by the SIR2-homolog deacetylase activates the enzyme.

It carries out the reaction acetate + ATP + CoA = acetyl-CoA + AMP + diphosphate. In terms of biological role, catalyzes the conversion of acetate into acetyl-CoA (AcCoA), an essential intermediate at the junction of anabolic and catabolic pathways. AcsA undergoes a two-step reaction. In the first half reaction, AcsA combines acetate with ATP to form acetyl-adenylate (AcAMP) intermediate. In the second half reaction, it can then transfer the acetyl group from AcAMP to the sulfhydryl group of CoA, forming the product AcCoA. This Deinococcus radiodurans (strain ATCC 13939 / DSM 20539 / JCM 16871 / CCUG 27074 / LMG 4051 / NBRC 15346 / NCIMB 9279 / VKM B-1422 / R1) protein is Acetyl-coenzyme A synthetase.